We begin with the raw amino-acid sequence, 712 residues long: Exocyst complex component EXO70I (712 aa).

Positions methionine 1–serine 18 are cleaved as a signal peptide. Residues leucine 26–arginine 53 are a coiled coil. Asparagine 111 carries an N-linked (GlcNAc...) asparagine glycan.

The protein belongs to the EXO70 family. As to quaternary structure, subunit of the exocyst complex that mediates vesicle tethering during exocytosis. Interacts with VPY at the periarbuscular membrane (PAM) around the arbuscule hyphal tips. In terms of tissue distribution, present at low levels in non-mycorrhizal root tips.

Its subcellular location is the cell membrane. Functionally, component of an exocyst subcomplex specifically required for periarbuscular membrane (PAM) biogenesis during arbuscular mycorrhizal (AM) symbiosis with AM fungi (e.g. Glomus versiforme), especially critical during the early branching phase of arbuscule development; probably involved in STR and STR2 delivery into the PAM. This Medicago truncatula (Barrel medic) protein is Exocyst complex component EXO70I.